Consider the following 194-residue polypeptide: Porimin (194 aa).

The first 24 residues, 1–24, serve as a signal peptide directing secretion; that stretch reads MALCARAALLLGALQVLALPGAVA. Over 25–151 the chain is Extracellular; that stretch reads QETYAQGSPS…PTKGKGSKFD (127 aa). Residues N36, N47, N51, N59, N76, and N114 are each glycosylated (N-linked (GlcNAc...) asparagine). The disordered stretch occupies residues 88-124; sequence KVSTPGVSPHVTPSASKSTPKTSASPNSTQTSASMTT. Residues 99 to 124 are compositionally biased toward low complexity; that stretch reads TPSASKSTPKTSASPNSTQTSASMTT. A helical transmembrane segment spans residues 152–172; the sequence is AGSFVGGIVLTLGVLSILYIG. Over 173-194 the chain is Cytoplasmic; that stretch reads CKMYYSRRGIRYRSIDEHDAII. Phosphoserine is present on S186.

Belongs to the CD164 family.

Its subcellular location is the membrane. Implicated in oncotic cell death, characterized by cell swelling, organelle swelling, vacuolization and increased membrane permeability. This chain is Porimin (Tmem123), found in Rattus norvegicus (Rat).